The chain runs to 116 residues: Holo-[acyl-carrier-protein] synthase (116 aa).

Residues D8 and E59 each contribute to the Mg(2+) site.

It belongs to the P-Pant transferase superfamily. AcpS family. It depends on Mg(2+) as a cofactor.

The protein resides in the cytoplasm. It carries out the reaction apo-[ACP] + CoA = holo-[ACP] + adenosine 3',5'-bisphosphate + H(+). Its function is as follows. Transfers the 4'-phosphopantetheine moiety from coenzyme A to a Ser of acyl-carrier-protein. The chain is Holo-[acyl-carrier-protein] synthase from Staphylococcus saprophyticus subsp. saprophyticus (strain ATCC 15305 / DSM 20229 / NCIMB 8711 / NCTC 7292 / S-41).